We begin with the raw amino-acid sequence, 355 residues long: Endonuclease III homolog (355 aa).

A Nuclear localization signal motif is present at residues 44–50 (PKKFRFQ). Residues 122 to 149 (FQGDIPDTVEDLMTLPGVGPKMGYLCMS) enclose the HhH domain. The active-site Nucleophile; for N-glycosylase activity is the lysine 142. Cysteine 210, cysteine 217, cysteine 220, and cysteine 228 together coordinate [4Fe-4S] cluster. Residues 252–255 (KKRP) carry the Nuclear localization signal motif. The interval 303–355 (KEPAADIDVDQKPPVAFHSTTKETRSLRRSKRVAKKSSQYFSQQSLQDIEDLV) is disordered. The span at 338-349 (KSSQYFSQQSLQ) shows a compositional bias: polar residues.

This sequence belongs to the Nth/MutY family. [4Fe-4S] cluster serves as cofactor.

The protein resides in the nucleus. It localises to the mitochondrion. The enzyme catalyses 2'-deoxyribonucleotide-(2'-deoxyribose 5'-phosphate)-2'-deoxyribonucleotide-DNA = a 3'-end 2'-deoxyribonucleotide-(2,3-dehydro-2,3-deoxyribose 5'-phosphate)-DNA + a 5'-end 5'-phospho-2'-deoxyribonucleoside-DNA + H(+). Functionally, bifunctional DNA N-glycosylase with associated apurinic/apyrimidinic (AP) lyase function that catalyzes the first step in base excision repair (BER), the primary repair pathway for the repair of oxidative DNA damage. The DNA N-glycosylase activity releases the damaged DNA base from DNA by cleaving the N-glycosidic bond, leaving an AP site. The AP-lyase activity cleaves the phosphodiester bond 3' to the AP site by a beta-elimination. Primarily recognizes and repairs oxidative base damage of pyrimidines. Also has 8-oxo-7,8-dihydroguanine (8-oxoG) DNA glycosylase activity. Also involved in the repair of 7-methylguanine lesions, although it cannot directly repair alkylated DNA bases. Probably does so via excision of methylformamidopyrimidine (mFapy) lesions, a spontaneous processing product of 7-methylguanine. The protein is Endonuclease III homolog (nth1) of Schizosaccharomyces pombe (strain 972 / ATCC 24843) (Fission yeast).